A 448-amino-acid polypeptide reads, in one-letter code: Trk system potassium uptake protein TrkA homolog 2 (448 aa).

In terms of domain architecture, RCK N-terminal 1 spans 1–124 (MKAVVIGAGE…RAQVGVDIMI (124 aa)). Residues 7–11 (GAGEV), Glu-29, 70–71 (TG), and Arg-101 contribute to the NAD(+) site. The RCK C-terminal 1 domain occupies 144-225 (IDAEMFAGGK…MADLENVFGN (82 aa)). The RCK N-terminal 2 domain maps to 230–348 (RNRILLIGCG…FEMVGIDIAV (119 aa)). NAD(+) is bound at residue 232-262 (RILLIGCGIVGFYLAKIIDKDENADLKVIEY). The 81-residue stretch at 368–448 (EALATIEGEK…AVRSVEKLFK (81 aa)) folds into the RCK C-terminal 2 domain.

Its function is as follows. Part of a potassium transport system. The protein is Trk system potassium uptake protein TrkA homolog 2 (trkA2) of Methanosarcina mazei (strain ATCC BAA-159 / DSM 3647 / Goe1 / Go1 / JCM 11833 / OCM 88) (Methanosarcina frisia).